A 320-amino-acid chain; its full sequence is ATP synthase gamma chain (320 aa).

This sequence belongs to the ATPase gamma chain family. In terms of assembly, F-type ATPases have 2 components, CF(1) - the catalytic core - and CF(0) - the membrane proton channel. CF(1) has five subunits: alpha(3), beta(3), gamma(1), delta(1), epsilon(1). CF(0) has three main subunits: a, b and c.

It is found in the cell membrane. Functionally, produces ATP from ADP in the presence of a proton gradient across the membrane. The gamma chain is believed to be important in regulating ATPase activity and the flow of protons through the CF(0) complex. This is ATP synthase gamma chain from Lactobacillus delbrueckii subsp. bulgaricus (strain ATCC 11842 / DSM 20081 / BCRC 10696 / JCM 1002 / NBRC 13953 / NCIMB 11778 / NCTC 12712 / WDCM 00102 / Lb 14).